The primary structure comprises 243 residues: Toxin CcTX-1 (243 aa).

Basic and acidic residues predominate over residues serine 1–serine 25. The interval serine 1–glycine 48 is disordered.

In terms of processing, contains disulfide bonds. Nematocytes.

The protein localises to the secreted. It localises to the nematocyst. The protein resides in the target cell membrane. In terms of biological role, has potent hemolytic activity. Is lethal to crayfish. Causes cutaneous inflammation in humans. May act as a pore-forming toxin, disrupting normal transmembrane ion concentration gradients in susceptible cells. The sequence is that of Toxin CcTX-1 from Cyanea capillata (Lion's mane jellyfish).